A 95-amino-acid chain; its full sequence is Integration host factor subunit beta (95 aa).

It belongs to the bacterial histone-like protein family. As to quaternary structure, heterodimer of an alpha and a beta chain.

This protein is one of the two subunits of integration host factor, a specific DNA-binding protein that functions in genetic recombination as well as in transcriptional and translational control. The chain is Integration host factor subunit beta from Shewanella putrefaciens (strain CN-32 / ATCC BAA-453).